A 152-amino-acid chain; its full sequence is Methylglyoxal synthase (152 aa).

The region spanning 6-152 is the MGS-like domain; that stretch reads RTIPAQKHIA…YQRYLQDRLK (147 aa). Residues H19, K23, 45 to 48, and 65 to 66 contribute to the substrate site; these read TGTT and SG. D71 (proton donor/acceptor) is an active-site residue. Residue H98 participates in substrate binding.

The protein belongs to the methylglyoxal synthase family.

It catalyses the reaction dihydroxyacetone phosphate = methylglyoxal + phosphate. Catalyzes the formation of methylglyoxal from dihydroxyacetone phosphate. This chain is Methylglyoxal synthase, found in Pectobacterium atrosepticum (strain SCRI 1043 / ATCC BAA-672) (Erwinia carotovora subsp. atroseptica).